Here is a 920-residue protein sequence, read N- to C-terminus: 2-oxoadipate dehydrogenase complex component E1 (920 aa).

2 positions are modified to N6-succinyllysine: lysine 183 and lysine 188. The disordered stretch occupies residues 299-318 (GKTRGRQQSQEDGDYSPNGS). 2 positions are modified to N6-succinyllysine: lysine 800 and lysine 818.

The protein belongs to the alpha-ketoglutarate dehydrogenase family. The 2-oxoadipate dehydrogenase complex is composed of OADH (2-oxoadipate dehydrogenase; E1a), DLST (dihydrolipoamide succinyltransferase; E2) and DLD (dihydrolipoamide dehydrogenase; E3). E1a functional unit is a dimer. It depends on thiamine diphosphate as a cofactor.

The protein resides in the mitochondrion. The enzyme catalyses N(6)-[(R)-lipoyl]-L-lysyl-[protein] + 2-oxoadipate + H(+) = N(6)-[(R)-S(8)-glutaryldihydrolipoyl]-L-lysyl-[protein] + CO2. It functions in the pathway amino-acid degradation. Functionally, 2-oxoadipate dehydrogenase (E1a) component of the 2-oxoadipate dehydrogenase complex (OADHC). Participates in the first step, rate limiting for the overall conversion of 2-oxoadipate (alpha-ketoadipate) to glutaryl-CoA and CO(2) catalyzed by the whole OADHC. Catalyzes the irreversible decarboxylation of 2-oxoadipate via the thiamine diphosphate (ThDP) cofactor and subsequent transfer of the decarboxylated acyl intermediate on an oxidized dihydrolipoyl group that is covalently amidated to the E2 enzyme (dihydrolipoyllysine-residue succinyltransferase or DLST). Can catalyze the decarboxylation of 2-oxoglutarate in vitro, but at a much lower rate than 2-oxoadipate. Responsible for the last step of L-lysine, L-hydroxylysine and L-tryptophan catabolism with the common product being 2-oxoadipate. In Rattus norvegicus (Rat), this protein is 2-oxoadipate dehydrogenase complex component E1 (Dhtkd1).